Here is a 77-residue protein sequence, read N- to C-terminus: Exodeoxyribonuclease 7 small subunit (77 aa).

Belongs to the XseB family. As to quaternary structure, heterooligomer composed of large and small subunits.

Its subcellular location is the cytoplasm. The enzyme catalyses Exonucleolytic cleavage in either 5'- to 3'- or 3'- to 5'-direction to yield nucleoside 5'-phosphates.. Functionally, bidirectionally degrades single-stranded DNA into large acid-insoluble oligonucleotides, which are then degraded further into small acid-soluble oligonucleotides. This Clostridium acetobutylicum (strain ATCC 824 / DSM 792 / JCM 1419 / IAM 19013 / LMG 5710 / NBRC 13948 / NRRL B-527 / VKM B-1787 / 2291 / W) protein is Exodeoxyribonuclease 7 small subunit.